The sequence spans 175 residues: Ribosome maturation factor RimM (175 aa).

Positions 96 to 175 (EGDYYWHDLI…TIEVDWDAGF (80 aa)) constitute a PRC barrel domain.

It belongs to the RimM family. As to quaternary structure, binds ribosomal protein uS19.

Its subcellular location is the cytoplasm. Functionally, an accessory protein needed during the final step in the assembly of 30S ribosomal subunit, possibly for assembly of the head region. Essential for efficient processing of 16S rRNA. May be needed both before and after RbfA during the maturation of 16S rRNA. It has affinity for free ribosomal 30S subunits but not for 70S ribosomes. The polypeptide is Ribosome maturation factor RimM (Haemophilus influenzae (strain PittEE)).